The sequence spans 275 residues: uncharacterized protein (275 aa).

Polar residues predominate over residues 148-158; it reads TFPTTAPSITP. Positions 148–173 are disordered; the sequence is TFPTTAPSITPGNKEGEKTTSTDTDE. A helical transmembrane segment spans residues 187–207; sequence ILIAVTLLLSGVAIIVFVIFE. The segment at 234–264 is disordered; sequence GQPPGTAESKPDSQPQKVGQDAANSSNPKKA. The segment covering 245–261 has biased composition (polar residues); that stretch reads DSQPQKVGQDAANSSNP.

It localises to the membrane. This is an uncharacterized protein from Homo sapiens (Human).